The chain runs to 325 residues: mRNA decay activator protein ZFP36 (325 aa).

The necessary for nuclear export stretch occupies residues 1–15; sequence MDLAAIYKSLLSLSP. Positions 1 to 98 are necessary and sufficient for the association with mRNA decay enzymes and mRNA decay activation; that stretch reads MDLAAIYKSL…PTSPTATPTT (98 aa). Necessary for localization of ARE-containing mRNAs to processing bodies (PBs) stretches follow at residues 1-172 and 98-325; these read MDLA…DLAA and TSSR…SVSE. Over residues 15 to 48 the composition is skewed to low complexity; the sequence is PELPSDLGETESSTSWASSGPWSLSSSDSSLPEA. The disordered stretch occupies residues 15 to 101; it reads PELPSDLGET…PTATPTTSSR (87 aa). Ser58 is modified (phosphoserine; by MAPKAPK2). Ser64 bears the Phosphoserine mark. The stretch at 69-73 is one P-P-P-P-G repeat; it reads PPPPG. The segment covering 75–101 has biased composition (low complexity); that stretch reads APLAPRPSSELSPSPTSPTATPTTSSR. Residues Ser86 and Ser88 each carry the phosphoserine modification. Thr90 carries the phosphothreonine modification. Ser91 is modified (phosphoserine). The interval 93-166 is necessary for nuclear localization; the sequence is TATPTTSSRY…GSRCHFIHNP (74 aa). Residues 95–171 are necessary for RNA-binding; that stretch reads TPTTSSRYKT…FIHNPSEDLA (77 aa). C3H1-type zinc fingers lie at residues 101–129 and 139–167; these read RYKT…HGLG and KYKT…HNPS. The necessary for interaction with PABPN1 stretch occupies residues 101 to 192; sequence RYKTELCRTF…ISFSGLPSGR (92 aa). Residue Ser167 is modified to Phosphoserine. Residues 172-325 are necessary for mRNA decay activation; sequence APGHPHVLRQ…PIFNRISVSE (154 aa). The residue at position 184 (Ser184) is a Phosphoserine; by MAPKAPK2. Disordered stretches follow at residues 185–248 and 260–325; these read FSGL…TPAC and VWGP…SVSE. Ser195 bears the Phosphoserine mark. One copy of the P-P-P-P-G repeat lies at 196 to 200; that stretch reads PPPAS. The span at 204 to 214 shows a compositional bias: low complexity; the sequence is PSVPSWSFSPS. The residue at position 216 (Ser216) is a Phosphoserine. One copy of the P-P-P-P-G repeat lies at 217 to 222; sequence PPPPPG. Ser227 carries the phosphoserine; by MAPK1; in vitro modification. A phosphoserine mark is found at Ser275, Ser295, and Ser322. Residues 285–295 are compositionally biased toward low complexity; sequence SSGSSLGGSDS. Residues 311 to 325 form an interaction with CNOT1 region; it reads APRRLPIFNRISVSE.

As to quaternary structure, associates with cytoplasmic CCR4-NOT and PAN2-PAN3 deadenylase complexes to trigger ARE-containing mRNA deadenylation and decay processes. Part of a mRNA decay activation complex at least composed of poly(A)-specific exoribonucleases CNOT6, EXOSC2 and XRN1 and mRNA-decapping enzymes DCP1A and DCP2. Associates with the RNA exosome complex. Interacts (via phosphorylated form) with 14-3-3 proteins; these interactions promote exclusion of ZFP36 from cytoplasmic stress granules in response to arsenite treatment in a MAPKAPK2-dependent manner and does not prevent CCR4-NOT deadenylase complex recruitment or ZFP36-induced ARE-containing mRNA deadenylation and decay processes. Interacts with 14-3-3 proteins; these interactions occur in response to rapamycin in an Akt-dependent manner. Interacts with AGO2 and AGO4. Interacts (via C-terminus) with CNOT1; this interaction occurs in a RNA-independent manner and induces mRNA deadenylation. Interacts (via N-terminus) with CNOT6. Interacts with CNOT6L. Interacts (via C-terminus) with CNOT7; this interaction occurs in a RNA-independent manner, induces mRNA deadenylation and is inhibited in a phosphorylation MAPKAPK2-dependent manner. Interacts (via unphosphorylated form) with CNOT8; this interaction occurs in a RNA-independent manner and is inhibited in a phosphorylation MAPKAPK2-dependent manner. Interacts with DCP1A. Interacts (via N-terminus) with DCP2. Interacts with EDC3. Interacts (via N-terminus) with EXOSC2. Interacts with heat shock 70 kDa proteins. Interacts with KHSRP; this interaction increases upon cytokine-induced treatment. Interacts with MAP3K4; this interaction enhances the association with SH3KBP1/CIN85. Interacts with MAPKAPK2; this interaction occurs upon skeletal muscle satellite cell activation. Interacts with NCL. Interacts with NUP214; this interaction increases upon lipopolysaccharide (LPS) stimulation. Interacts with PABPC1; this interaction occurs in a RNA-dependent manner. Interacts (via hypophosphorylated form) with PABPN1 (via RRM domain and C-terminal arginine-rich region); this interaction occurs in the nucleus in a RNA-independent manner, decreases in presence of single-stranded poly(A) RNA-oligomer and in a p38 MAPK-dependent-manner and inhibits nuclear poly(A) tail synthesis. Interacts with PAN2. Interacts (via C3H1-type zinc finger domains) with PKM. Interacts (via C3H1-type zinc finger domains) with nuclear RNA poly(A) polymerase. Interacts with PPP2CA; this interaction occurs in LPS-stimulated cells and induces ZFP36 dephosphorylation, and hence may promote ARE-containing mRNAs decay. Interacts (via C-terminus) with PRR5L (via C-terminus); this interaction may accelerate ZFP36-mediated mRNA decay during stress. Interacts (via C-terminus) with SFN; this interaction occurs in a phosphorylation-dependent manner. Interacts (via extreme C-terminal region) with SH3KBP1/CIN85 (via SH3 domains); this interaction enhances MAP3K4-induced phosphorylation of ZFP36 at Ser-64 and Ser-91 and does not alter neither ZFP36 binding to ARE-containing transcripts nor TNF-alpha mRNA decay. Interacts with XRN1. Interacts (via C-terminus and Ser-184 phosphorylated form) with YWHAB; this interaction occurs in a p38/MAPKAPK2-dependent manner, increases cytoplasmic localization of ZFP36 and protects ZFP36 from Ser-184 dephosphorylation by serine/threonine phosphatase 2A, and hence may be crucial for stabilizing ARE-containing mRNAs. Interacts (via phosphorylated form) with YWHAE. Interacts (via C-terminus) with YWHAG; this interaction occurs in a phosphorylation-dependent manner. Interacts with YWHAH; this interaction occurs in a phosphorylation-dependent manner. Interacts with YWHAQ; this interaction occurs in a phosphorylation-dependent manner. Interacts with (via C-terminus) YWHAZ; this interaction occurs in a phosphorylation-dependent manner. Does not interact with SH3KBP1. Interacts (via P-P-P-P-G repeats) with GIGYF2; the interaction is direct. Post-translationally, phosphorylated. Phosphorylation at serine and/or threonine residues occurs in a p38 MAPK- and MAPKAPK2-dependent manner. Phosphorylated by MAPKAPK2 at Ser-58 and Ser-184; phosphorylation increases its stability and cytoplasmic localization, promotes binding to 14-3-3 adapter proteins and inhibits the recruitment of cytoplasmic CCR4-NOT and PAN2-PAN3 deadenylase complexes to the mRNA decay machinery, thereby inhibiting ZFP36-induced ARE-containing mRNA deadenylation and decay processes. Phosphorylation by MAPKAPK2 does not impair ARE-containing RNA-binding. Phosphorylated in a MAPKAPK2- and p38 MAPK-dependent manner upon skeletal muscle satellite cell activation; this phosphorylation inhibits ZFP36-mediated mRNA decay activity, and hence stabilizes MYOD1 mRNA. Phosphorylated by MAPK1 upon mitogen stimulation. Phosphorylated at Ser-64 and Ser-91; these phosphorylations increase in a SH3KBP1-dependent manner. Phosphorylated at serine and threonine residues in a pyruvate kinase PKM- and p38 MAPK-dependent manner. Phosphorylation at Ser-58 may participate in the PKM-mediated degradation of ZFP36 in a p38 MAPK-dependent manner. Dephosphorylated by serine/threonine phosphatase 2A at Ser-184. In terms of processing, ubiquitinated; pyruvate kinase (PKM)-dependent ubiquitination leads to proteasomal degradation through a p38 MAPK signaling pathway.

It localises to the nucleus. Its subcellular location is the cytoplasm. The protein localises to the cytoplasmic granule. The protein resides in the P-body. In terms of biological role, zinc-finger RNA-binding protein that destabilizes numerous cytoplasmic AU-rich element (ARE)-containing mRNA transcripts by promoting their poly(A) tail removal or deadenylation, and hence provide a mechanism for attenuating protein synthesis. Acts as an 3'-untranslated region (UTR) ARE mRNA-binding adapter protein to communicate signaling events to the mRNA decay machinery. Recruits deadenylase CNOT7 (and probably the CCR4-NOT complex) via association with CNOT1, and hence promotes ARE-mediated mRNA deadenylation. Also functions by recruiting components of the cytoplasmic RNA decay machinery to the bound ARE-containing mRNAs. Self regulates by destabilizing its own mRNA. Binds to 3'-UTR ARE of numerous mRNAs. Also binds to ARE of its own mRNA. Plays a role in anti-inflammatory responses; suppresses tumor necrosis factor (TNF)-alpha production by stimulating ARE-mediated TNF-alpha mRNA decay and several other inflammatory ARE-containing mRNAs in interferon (IFN)- and/or lipopolysaccharide (LPS)-induced macrophages. Also plays a role in the regulation of dendritic cell maturation at the post-transcriptional level, and hence operates as part of a negative feedback loop to limit the inflammatory response. Promotes ARE-mediated mRNA decay of hypoxia-inducible factor HIF1A mRNA during the response of endothelial cells to hypoxia. Positively regulates early adipogenesis of preadipocytes by promoting ARE-mediated mRNA decay of immediate early genes (IEGs). Negatively regulates hematopoietic/erythroid cell differentiation by promoting ARE-mediated mRNA decay of the transcription factor STAT5B mRNA. Plays a role in maintaining skeletal muscle satellite cell quiescence by promoting ARE-mediated mRNA decay of the myogenic determination factor MYOD1 mRNA. Also associates with and regulates the expression of non-ARE-containing target mRNAs at the post-transcriptional level, such as MHC class I mRNAs. Participates in association with argonaute RISC catalytic components in the ARE-mediated mRNA decay mechanism; assists microRNA (miRNA) targeting ARE-containing mRNAs. May also play a role in the regulation of cytoplasmic mRNA decapping; enhances decapping of ARE-containing RNAs, in vitro. Involved in the delivery of target ARE-mRNAs to processing bodies (PBs). In addition to its cytosolic mRNA-decay function, affects nuclear pre-mRNA processing. Negatively regulates nuclear poly(A)-binding protein PABPN1-stimulated polyadenylation activity on ARE-containing pre-mRNA during LPS-stimulated macrophages. Also involved in the regulation of stress granule (SG) and P-body (PB) formation and fusion. Plays a role in the regulation of keratinocyte proliferation, differentiation and apoptosis. Plays a role as a tumor suppressor by inhibiting cell proliferation in breast cancer cells. The chain is mRNA decay activator protein ZFP36 from Ovis aries (Sheep).